Here is a 206-residue protein sequence, read N- to C-terminus: Small ribosomal subunit protein uS4 (206 aa).

The S4 RNA-binding domain maps to 98 to 163 (MRLDNVVYRL…SEKFKTFVEN (66 aa)).

It belongs to the universal ribosomal protein uS4 family. As to quaternary structure, part of the 30S ribosomal subunit. Contacts protein S5. The interaction surface between S4 and S5 is involved in control of translational fidelity.

Its function is as follows. One of the primary rRNA binding proteins, it binds directly to 16S rRNA where it nucleates assembly of the body of the 30S subunit. In terms of biological role, with S5 and S12 plays an important role in translational accuracy. The sequence is that of Small ribosomal subunit protein uS4 from Clostridium botulinum (strain Alaska E43 / Type E3).